The primary structure comprises 163 residues: Nucleotide-binding protein MUL_0671 (163 aa).

Belongs to the YajQ family.

Functionally, nucleotide-binding protein. The sequence is that of Nucleotide-binding protein MUL_0671 from Mycobacterium ulcerans (strain Agy99).